The sequence spans 172 residues: NAD(P)H-quinone oxidoreductase subunit J (172 aa).

Belongs to the complex I 30 kDa subunit family. NDH-1 can be composed of about 15 different subunits; different subcomplexes with different compositions have been identified which probably have different functions.

It is found in the cellular thylakoid membrane. The catalysed reaction is a plastoquinone + NADH + (n+1) H(+)(in) = a plastoquinol + NAD(+) + n H(+)(out). The enzyme catalyses a plastoquinone + NADPH + (n+1) H(+)(in) = a plastoquinol + NADP(+) + n H(+)(out). NDH-1 shuttles electrons from an unknown electron donor, via FMN and iron-sulfur (Fe-S) centers, to quinones in the respiratory and/or the photosynthetic chain. The immediate electron acceptor for the enzyme in this species is believed to be plastoquinone. Couples the redox reaction to proton translocation, and thus conserves the redox energy in a proton gradient. Cyanobacterial NDH-1 also plays a role in inorganic carbon-concentration. The chain is NAD(P)H-quinone oxidoreductase subunit J from Synechococcus elongatus (strain ATCC 33912 / PCC 7942 / FACHB-805) (Anacystis nidulans R2).